Reading from the N-terminus, the 214-residue chain is Protein get-1 (214 aa).

The Lumenal segment spans residues 1 to 4; sequence MPSL. Residues 5–24 form a helical membrane-spanning segment; the sequence is LVVIFVIELFVQLVNTIGAA. The Cytoplasmic portion of the chain corresponds to 25 to 110; sequence TINNLLWRIA…KFDRTLTTVR (86 aa). The stretch at 73 to 107 forms a coiled coil; sequence KWARLRRQHDKLLEDLEKRKKELDAAKTKFDRTLT. Residues 111–131 form a helical membrane-spanning segment; that stretch reads VVATRGLQWFLPFWYSREPMF. Residues 132–155 lie on the Lumenal side of the membrane; that stretch reads WLPYGWFPYYVEWFASFPRAPLGS. The helical transmembrane segment at 156 to 172 threads the bilayer; that stretch reads VSIVVWQWACTGVIKLV. The Cytoplasmic portion of the chain corresponds to 173–214; the sequence is IETVMAVVGLIVAARQKQQEKQKAKQAVPAAGGGDSKAEEAK. Residues 190–214 form a disordered region; sequence QQEKQKAKQAVPAAGGGDSKAEEAK.

It belongs to the WRB/GET1 family. As to quaternary structure, interacts with GET3.

Its subcellular location is the endoplasmic reticulum membrane. In terms of biological role, required for the post-translational delivery of tail-anchored (TA) proteins to the endoplasmic reticulum. Acts as a membrane receptor for soluble GET3, which recognizes and selectively binds the transmembrane domain of TA proteins in the cytosol. In Neurospora crassa (strain ATCC 24698 / 74-OR23-1A / CBS 708.71 / DSM 1257 / FGSC 987), this protein is Protein get-1 (get-1).